The primary structure comprises 141 residues: uncharacterized protein (141 aa).

This is an uncharacterized protein from Thermoproteus tenax (TTV1).